The sequence spans 153 residues: Ribosome maturation factor RimP (153 aa).

It belongs to the RimP family.

It is found in the cytoplasm. Its function is as follows. Required for maturation of 30S ribosomal subunits. The sequence is that of Ribosome maturation factor RimP from Coxiella burnetii (strain CbuK_Q154) (Coxiella burnetii (strain Q154)).